The chain runs to 621 residues: Methionine--tRNA ligase (621 aa).

The 'HIGH' region motif lies at Pro-11 to His-21. Residues Cys-143, Cys-146, Cys-156, and Cys-159 each coordinate Zn(2+). Residues Lys-347 to Ser-351 carry the 'KMSKS' region motif. Ser-350 serves as a coordination point for ATP.

The protein belongs to the class-I aminoacyl-tRNA synthetase family. MetG type 1 subfamily. In terms of assembly, monomer. Zn(2+) serves as cofactor.

It localises to the cytoplasm. The enzyme catalyses tRNA(Met) + L-methionine + ATP = L-methionyl-tRNA(Met) + AMP + diphosphate. Functionally, is required not only for elongation of protein synthesis but also for the initiation of all mRNA translation through initiator tRNA(fMet) aminoacylation. This chain is Methionine--tRNA ligase, found in Bifidobacterium longum subsp. infantis (strain ATCC 15697 / DSM 20088 / JCM 1222 / NCTC 11817 / S12).